The chain runs to 786 residues: Endonuclease MutS2 (786 aa).

Residue 332–339 participates in ATP binding; that stretch reads GPNTGGKT. One can recognise a Smr domain in the interval 711–786; that stretch reads IDLRGMDSEE…GTGVTVVILK (76 aa).

It belongs to the DNA mismatch repair MutS family. MutS2 subfamily. In terms of assembly, homodimer. Binds to stalled ribosomes, contacting rRNA.

Its function is as follows. Endonuclease that is involved in the suppression of homologous recombination and thus may have a key role in the control of bacterial genetic diversity. Functionally, acts as a ribosome collision sensor, splitting the ribosome into its 2 subunits. Detects stalled/collided 70S ribosomes which it binds and splits by an ATP-hydrolysis driven conformational change. Acts upstream of the ribosome quality control system (RQC), a ribosome-associated complex that mediates the extraction of incompletely synthesized nascent chains from stalled ribosomes and their subsequent degradation. Probably generates substrates for RQC. In Clostridium perfringens (strain 13 / Type A), this protein is Endonuclease MutS2.